The sequence spans 284 residues: Cystinosin homolog (284 aa).

7 helical membrane-spanning segments follow: residues 3-23 (ALSIISIIIGWIYFACWSLSF), 37-57 (IGLSFDFLLFNITGYACYSVF), 86-106 (IAFAIHGFVLTAITIIQCFIY), 116-136 (LGIGIATLIWVSLIVMTILGF), 139-159 (VFTWLWVINYYSYVKLFITFI), 181-201 (NVLLDFSGGVLSLLQMFLDVA), and 216-236 (LGLSLFSIAFDILFIIQHYIL). The PQ-loop 1 domain occupies 4–70 (LSIISIIIGW…LYFDKLVKNE (67 aa)). The PQ-loop 2 domain occupies 154–208 (LFITFIKYIPQAYLNFKNKSTSGWSVHNVLLDFSGGVLSLLQMFLDVADSGNWNI). The segment at 247–269 (NLNDNNIPNNNNNNNNNINNNTP) is disordered.

The protein belongs to the cystinosin family.

The protein resides in the lysosome membrane. It carries out the reaction L-cystine(out) + H(+)(out) = L-cystine(in) + H(+)(in). Its function is as follows. Cystine/H(+) symporter that mediates export of cystine, the oxidized dimer of cysteine, from lysosomes. The chain is Cystinosin homolog (ctns) from Dictyostelium discoideum (Social amoeba).